Reading from the N-terminus, the 171-residue chain is Sec-independent protein translocase protein TatB (171 aa).

A helical transmembrane segment spans residues 1–21; that stretch reads MFDIGFSELLLVFIIGLVVLG. The segment at 89–171 is disordered; sequence AESMKRSYVA…APSPSSSDKP (83 aa). The segment covering 100-123 has biased composition (basic and acidic residues); sequence DPEKASDEAHTIHNPVVKDNETAH. Positions 130–139 are enriched in polar residues; sequence AAQTQASSPE.

The protein belongs to the TatB family. The Tat system comprises two distinct complexes: a TatABC complex, containing multiple copies of TatA, TatB and TatC subunits, and a separate TatA complex, containing only TatA subunits. Substrates initially bind to the TatABC complex, which probably triggers association of the separate TatA complex to form the active translocon.

Its subcellular location is the cell inner membrane. In terms of biological role, part of the twin-arginine translocation (Tat) system that transports large folded proteins containing a characteristic twin-arginine motif in their signal peptide across membranes. Together with TatC, TatB is part of a receptor directly interacting with Tat signal peptides. TatB may form an oligomeric binding site that transiently accommodates folded Tat precursor proteins before their translocation. In Escherichia coli O1:K1 / APEC, this protein is Sec-independent protein translocase protein TatB.